Reading from the N-terminus, the 869-residue chain is Ubiquitin carboxyl-terminal hydrolase 29 (869 aa).

2 stretches are compositionally biased toward polar residues: residues 104-120 (SSTPCESQQPMEPMSSQ) and 140-150 (SLNTTPESGTP). The tract at residues 104 to 226 (SSTPCESQQP…KAVTLREQEK (123 aa)) is disordered. Basic and acidic residues predominate over residues 187–200 (VNKDIPKENTPDQK). The span at 201 to 212 (KKSRRYYSRNRG) shows a compositional bias: basic residues. Over residues 213–226 (GKAEKAVTLREQEK) the composition is skewed to basic and acidic residues. The 538-residue stretch at 289-826 (EGFPNLGNTC…SGYIFFYMHN (538 aa)) folds into the USP domain. Cys-298 functions as the Nucleophile in the catalytic mechanism. Residues 723–754 (SQEDPEKDLSRSPELQEDDPHSFAFGSDDSKD) are disordered. His-781 (proton acceptor) is an active-site residue.

It belongs to the peptidase C19 family. In terms of tissue distribution, predominantly expressed in brain and testis. Highest expression levels in adult brain, especially in the cerebral cortex and hippocampus, and in the forebrain, face, and limb buds of midgestation mouse embryos.

It is found in the cytoplasm. The protein localises to the perinuclear region. It catalyses the reaction Thiol-dependent hydrolysis of ester, thioester, amide, peptide and isopeptide bonds formed by the C-terminal Gly of ubiquitin (a 76-residue protein attached to proteins as an intracellular targeting signal).. Functionally, deubiquitinase involved in innate antiviral immunity by mediating 'Lys-48'-linked deubiquitination of CGAS, thereby promoting its stabilization. The chain is Ubiquitin carboxyl-terminal hydrolase 29 from Mus musculus (Mouse).